The chain runs to 441 residues: 3-phosphoshikimate 1-carboxyvinyltransferase (441 aa).

3-phosphoshikimate-binding residues include lysine 26, serine 27, and arginine 31. Lysine 26 serves as a coordination point for phosphoenolpyruvate. Residues glycine 99 and arginine 127 each contribute to the phosphoenolpyruvate site. 6 residues coordinate 3-phosphoshikimate: serine 173, serine 174, glutamine 175, serine 203, aspartate 320, and lysine 347. Glutamine 175 is a binding site for phosphoenolpyruvate. Aspartate 320 (proton acceptor) is an active-site residue. Phosphoenolpyruvate is bound by residues arginine 351, arginine 393, and lysine 423.

Belongs to the EPSP synthase family. Monomer.

It is found in the cytoplasm. It carries out the reaction 3-phosphoshikimate + phosphoenolpyruvate = 5-O-(1-carboxyvinyl)-3-phosphoshikimate + phosphate. It participates in metabolic intermediate biosynthesis; chorismate biosynthesis; chorismate from D-erythrose 4-phosphate and phosphoenolpyruvate: step 6/7. Its function is as follows. Catalyzes the transfer of the enolpyruvyl moiety of phosphoenolpyruvate (PEP) to the 5-hydroxyl of shikimate-3-phosphate (S3P) to produce enolpyruvyl shikimate-3-phosphate and inorganic phosphate. In Janthinobacterium sp. (strain Marseille) (Minibacterium massiliensis), this protein is 3-phosphoshikimate 1-carboxyvinyltransferase.